The sequence spans 261 residues: Phosphonates import ATP-binding protein PhnC (261 aa).

Positions 9–253 (IQLKDVSKIY…VFDDIYNGGN (245 aa)) constitute an ABC transporter domain. Position 42–49 (42–49 (GLSGAGKS)) interacts with ATP.

This sequence belongs to the ABC transporter superfamily. Phosphonates importer (TC 3.A.1.9.1) family. As to quaternary structure, the complex is composed of two ATP-binding proteins (PhnC), two transmembrane proteins (PhnE) and a solute-binding protein (PhnD).

The protein localises to the cell membrane. It carries out the reaction phosphonate(out) + ATP + H2O = phosphonate(in) + ADP + phosphate + H(+). Functionally, part of the ABC transporter complex PhnCDE involved in phosphonates import. Responsible for energy coupling to the transport system. In Lactobacillus gasseri (strain ATCC 33323 / DSM 20243 / BCRC 14619 / CIP 102991 / JCM 1131 / KCTC 3163 / NCIMB 11718 / NCTC 13722 / AM63), this protein is Phosphonates import ATP-binding protein PhnC.